Here is a 515-residue protein sequence, read N- to C-terminus: Galactokinase (515 aa).

The alpha-D-galactose site is built by Arg48, Asp54, His55, and Asp57. ATP is bound by residues Gly155, Gly157, Ser159, and Ser160. Asp205 is a binding site for alpha-D-galactose. Catalysis depends on Asp205, which acts as the Proton acceptor. 3 residues coordinate ATP: Ser249, Asn250, and Lys251. Alpha-D-galactose is bound at residue Tyr259.

It belongs to the GHMP kinase family. GalK subfamily.

The catalysed reaction is alpha-D-galactose + ATP = alpha-D-galactose 1-phosphate + ADP + H(+). Its pathway is carbohydrate metabolism; galactose metabolism. Its function is as follows. Galactokinase is a key enzyme in the galactose metabolism where it catalyzes the conversion of alpha-D-galactose to galactose 1-phosphate. Can also induce the transcription of the gal genes in response to the organism being challenged with galactose as the sole source of carbon. The polypeptide is Galactokinase (Candida albicans (Yeast)).